The sequence spans 152 residues: MRILIDGDACPGKYIIENIARENDIEVIIYCDTNHILKSNYSTVVTVDSGFQSVDMVIVNKVRSGDIVVSQDYGVAAMVLGKKAYAINPKGYIYHEGNMDKLLFERYISSKVRRTGGRTSNPKKRTKEDDKRLRENLFQLILNGKVYKGEDW.

Belongs to the UPF0178 family.

The polypeptide is UPF0178 protein CKL_3490 (Clostridium kluyveri (strain ATCC 8527 / DSM 555 / NBRC 12016 / NCIMB 10680 / K1)).